Consider the following 451-residue polypeptide: Chromosomal replication initiator protein DnaA (451 aa).

Positions 1 to 77 (MTENEQIFWN…EVYNAQISVD (77 aa)) are domain I, interacts with DnaA modulators. Positions 77 to 110 (DYVFEEDLMIEQNQTKINQKPKQQALNSLPTVTS) are domain II. Residues 111–329 (DLNPKYSFEN…GALKDISLVA (219 aa)) are domain III, AAA+ region. ATP contacts are provided by G155, G157, K158, and T159. A domain IV, binds dsDNA region spans residues 330–451 (NFKQIDTITV…EIETIKNKIK (122 aa)).

Belongs to the DnaA family. As to quaternary structure, oligomerizes as a right-handed, spiral filament on DNA at oriC.

Its subcellular location is the cytoplasm. Its function is as follows. Plays an essential role in the initiation and regulation of chromosomal replication. ATP-DnaA binds to the origin of replication (oriC) to initiate formation of the DNA replication initiation complex once per cell cycle. Binds the DnaA box (a 9 base pair repeat at the origin) and separates the double-stranded (ds)DNA. Forms a right-handed helical filament on oriC DNA; dsDNA binds to the exterior of the filament while single-stranded (ss)DNA is stabiized in the filament's interior. The ATP-DnaA-oriC complex binds and stabilizes one strand of the AT-rich DNA unwinding element (DUE), permitting loading of DNA polymerase. After initiation quickly degrades to an ADP-DnaA complex that is not apt for DNA replication. Binds acidic phospholipids. This chain is Chromosomal replication initiator protein DnaA, found in Streptococcus pyogenes serotype M4 (strain MGAS10750).